A 122-amino-acid chain; its full sequence is Large ribosomal subunit protein uL14 (122 aa).

The protein belongs to the universal ribosomal protein uL14 family. In terms of assembly, part of the 50S ribosomal subunit. Forms a cluster with proteins L3 and L19. In the 70S ribosome, L14 and L19 interact and together make contacts with the 16S rRNA in bridges B5 and B8.

In terms of biological role, binds to 23S rRNA. Forms part of two intersubunit bridges in the 70S ribosome. In Xylella fastidiosa (strain M23), this protein is Large ribosomal subunit protein uL14.